We begin with the raw amino-acid sequence, 239 residues long: MQKLELLYEGKAKRIYRTEAADMVWIEYKDSATAFNGEKKATITGKGRLNNEITTFLFRKLQEVGIETHFVKKLSDTEQLVKKVSIIPLEVVTRNVIAGSLSKRLGMEEGIPLAKPIVEFYYKDDDLGDPLVTEDHIRVLNAATLEQISTLREKALRINQVLIEHFASCRVRLIDFKLEFGITEEGKIVLADEISPDTCRLWDEESNEKFDKDVFRRDLGNLTEAYEEILKRLGGASHV.

This sequence belongs to the SAICAR synthetase family.

The enzyme catalyses 5-amino-1-(5-phospho-D-ribosyl)imidazole-4-carboxylate + L-aspartate + ATP = (2S)-2-[5-amino-1-(5-phospho-beta-D-ribosyl)imidazole-4-carboxamido]succinate + ADP + phosphate + 2 H(+). The protein operates within purine metabolism; IMP biosynthesis via de novo pathway; 5-amino-1-(5-phospho-D-ribosyl)imidazole-4-carboxamide from 5-amino-1-(5-phospho-D-ribosyl)imidazole-4-carboxylate: step 1/2. The chain is Phosphoribosylaminoimidazole-succinocarboxamide synthase from Bacillus cytotoxicus (strain DSM 22905 / CIP 110041 / 391-98 / NVH 391-98).